Reading from the N-terminus, the 232-residue chain is Ribose-5-phosphate isomerase A (232 aa).

Substrate is bound by residues 28 to 31 (TGST), 83 to 86 (DGAD), and 96 to 99 (KGGG). Glu-105 acts as the Proton acceptor in catalysis. Lys-123 is a substrate binding site.

Belongs to the ribose 5-phosphate isomerase family. Homodimer.

The catalysed reaction is aldehydo-D-ribose 5-phosphate = D-ribulose 5-phosphate. Its pathway is carbohydrate degradation; pentose phosphate pathway; D-ribose 5-phosphate from D-ribulose 5-phosphate (non-oxidative stage): step 1/1. Catalyzes the reversible conversion of ribose-5-phosphate to ribulose 5-phosphate. In Rhodopseudomonas palustris (strain HaA2), this protein is Ribose-5-phosphate isomerase A.